The sequence spans 261 residues: HTH-type transcriptional repressor CsqR (261 aa).

The HTH deoR-type domain occupies 8–63 (GNPRHDQLLMLIAERGYMNIDELANLLDVSTQTVRRDIRKLSEQGLITRHHGGAGR). The H-T-H motif DNA-binding region spans 25–44 (MNIDELANLLDVSTQTVRRD).

Monomer in the absence of DNA. Exhibits a high level of cooperativity once it is bound to its target DNA.

Its activity is regulated as follows. Inactivated in the presence of the effectors sulfoquinovose and sulfoquinovosyl glycerol, leading to the de-repression of the target genes. Functionally, involved in the regulation of the sulfoquinovose operon. Represses the expression of the yihUTS operon and of the yihV and csqR genes. Binds DNA inside the spacer between the bidirectional transcription units comprising the yihUTS operon and the yihV gene, and upstream the csqR gene itself. The sequence is that of HTH-type transcriptional repressor CsqR from Escherichia coli (strain K12).